The chain runs to 320 residues: NAC domain-containing protein 20 (320 aa).

Residues 14–170 enclose the NAC domain; that stretch reads LPPGFRFHPT…DWAVCRIFHK (157 aa). The DNA-binding element occupies 114–176; sequence IGMKKTLVFY…IFHKSSGIKK (63 aa).

As to quaternary structure, forms homodimers. Forms heterodimers with NAC26. As to expression, expressed in developing seeds.

The protein localises to the nucleus. The protein resides in the endoplasmic reticulum. Its function is as follows. Transcription factor that acts redundantly with NAC26 to regulate the expression of genes involved in the biosynthesis of starch and storage proteins in grain. Directly binds to the promoters of starch synthase 1 (SS1), pullulanase (PUL), glutelin A1 (GLUA1), glutelins B4 and B5 (GLUB4 and GLUB5), alpha-globulin and 16 kDa prolamin, and activates their expression. Possesses transactivation activity in yeast. This chain is NAC domain-containing protein 20, found in Oryza sativa subsp. indica (Rice).